Consider the following 215-residue polypeptide: Orotate phosphoribosyltransferase (215 aa).

A 5-phospho-alpha-D-ribose 1-diphosphate-binding site is contributed by lysine 26. Phenylalanine 34–phenylalanine 35 lines the orotate pocket. Residues tyrosine 72–lysine 73, arginine 99, lysine 100, lysine 103, histidine 105, and aspartate 124–alanine 132 contribute to the 5-phospho-alpha-D-ribose 1-diphosphate site. Orotate contacts are provided by threonine 128 and arginine 156.

It belongs to the purine/pyrimidine phosphoribosyltransferase family. PyrE subfamily. As to quaternary structure, homodimer. Requires Mg(2+) as cofactor.

The enzyme catalyses orotidine 5'-phosphate + diphosphate = orotate + 5-phospho-alpha-D-ribose 1-diphosphate. Its pathway is pyrimidine metabolism; UMP biosynthesis via de novo pathway; UMP from orotate: step 1/2. Its function is as follows. Catalyzes the transfer of a ribosyl phosphate group from 5-phosphoribose 1-diphosphate to orotate, leading to the formation of orotidine monophosphate (OMP). This Stutzerimonas stutzeri (strain A1501) (Pseudomonas stutzeri) protein is Orotate phosphoribosyltransferase.